The primary structure comprises 277 residues: Inositol monophosphatase 1 (277 aa).

Mg(2+) is bound by residues glutamate 70, aspartate 90, isoleucine 92, and aspartate 93. Substrate contacts are provided by residues glutamate 70, 90–95 (DPIDGT), 194–196 (GTA), glutamate 213, and aspartate 220. Mg(2+) is bound at residue aspartate 220.

The protein belongs to the inositol monophosphatase superfamily. As to quaternary structure, homodimer. It depends on Mg(2+) as a cofactor. Mostly expressed in brain, small intestine, testis, kidney, and spleen (at protein level).

The protein resides in the cytoplasm. The enzyme catalyses a myo-inositol phosphate + H2O = myo-inositol + phosphate. It catalyses the reaction 1D-myo-inositol 1-phosphate + H2O = myo-inositol + phosphate. It carries out the reaction 1D-myo-inositol 2-phosphate + H2O = myo-inositol + phosphate. The catalysed reaction is 1D-myo-inositol 3-phosphate + H2O = myo-inositol + phosphate. The enzyme catalyses 1D-myo-inositol 4-phosphate + H2O = myo-inositol + phosphate. It catalyses the reaction 1D-myo-inositol 5-phosphate + H2O = myo-inositol + phosphate. It carries out the reaction 1D-myo-inositol 6-phosphate + H2O = myo-inositol + phosphate. The catalysed reaction is scyllo-inositol 1-phosphate + H2O = scyllo-inositol + phosphate. The enzyme catalyses alpha-D-galactose 1-phosphate + H2O = D-galactose + phosphate. It catalyses the reaction alpha-D-glucose 1-phosphate + H2O = D-glucose + phosphate. It carries out the reaction D-glucose 6-phosphate + H2O = D-glucose + phosphate. The catalysed reaction is beta-D-fructose 1-phosphate + H2O = D-fructose + phosphate. The enzyme catalyses glycerol 2-phosphate + H2O = glycerol + phosphate. It catalyses the reaction adenosine 2'-phosphate + H2O = adenosine + phosphate. It functions in the pathway polyol metabolism; myo-inositol biosynthesis; myo-inositol from D-glucose 6-phosphate: step 2/2. With respect to regulation, inhibited by Li(+), Ca(2+) and Mn(2+), but also by Mg(2+) at concentrations above 3 mM. In terms of biological role, phosphatase involved in the dephosphorylation of myo-inositol monophosphate to generate myo-inositol. Is also able to dephosphorylate scyllo-inositol-phosphate, myo-inositol 1,4-diphosphate, scyllo-inositol-1,3-diphosphate and scyllo-inositol-1,4-diphosphate. Also dephosphorylates in vitro other sugar-phosphates including D-galactose-1-phosphate, glucose-1-phosphate, glucose-6-phosphate, fructose-1-phosphate, beta-glycerophosphate and 2'-AMP. Responsible for the provision of inositol required for synthesis of phosphatidylinositol and polyphosphoinositides, and involved in maintaining normal brain function. Has been implicated as the pharmacological target for lithium Li(+) action in brain. In Mus musculus (Mouse), this protein is Inositol monophosphatase 1 (Impa1).